The following is a 669-amino-acid chain: MGKIKELQTSLANKIAAGEVVERPSSVVKELLENAIDAGATEISIEVEESGVQSIRVVDNGSGIEAEDLGLVFHRHATSKLDQDEDLFHIRTLGFRGEALASISSVAKVTLKTCTDNANGNEIYVENGEILNHKPAKAKKGTDILVESLFYNTPARLKYIKSLYTELGKITDIVNRMAMSHPDIRIALISDGKTMLSTNGSGRTNEVMAEIYGMKVARDLVHISGDTSDYHIEGFVAKPEHSRSNKHYISIFINGRYIKNFMLNKAILEGYHTLLTIGRFPICYINIEMDPILVDVNVHPTKLEVRLSKEEQLYQLIVSKIQEAFKDRILIPKNNLDYVPKKNKVLHSFEQQKIEFEQRQNTENNQEKTFSSEESNSKPFMVENQNDEIVIREDSYNPFVTKTSESLIADDESSGYNNTREKDEDYFKKQQEILQEMDQTFDSNDDTSVQNYENKASDDYYDVNDIKGTKSKDPKRRIPYMEIVGQVHGTYIIAQNEFGMYMIDQHAAQERIKYEYFRDKIGEVTNEVQDLLIPLTFHFSKDEQLVIDQYKNELQQVGIMLEHFGGHDYIVSSYPVWFPKDEVEEIIKDMIELILEEKKVDIKKLREDVAIMMSCKKSIKANHYLQKHEMSDLIDQLREAEDPFTCPHGRPIIINFSKYELEKLFKRVM.

A disordered region spans residues 356-377; that stretch reads FEQRQNTENNQEKTFSSEESNS. The segment covering 361–377 has biased composition (polar residues); that stretch reads NTENNQEKTFSSEESNS.

The protein belongs to the DNA mismatch repair MutL/HexB family.

Functionally, this protein is involved in the repair of mismatches in DNA. It is required for dam-dependent methyl-directed DNA mismatch repair. May act as a 'molecular matchmaker', a protein that promotes the formation of a stable complex between two or more DNA-binding proteins in an ATP-dependent manner without itself being part of a final effector complex. This Staphylococcus aureus (strain MSSA476) protein is DNA mismatch repair protein MutL.